The following is a 211-amino-acid chain: Thymidylate kinase (211 aa).

10-17 (GVEGCGKT) serves as a coordination point for ATP.

The protein belongs to the thymidylate kinase family.

The enzyme catalyses dTMP + ATP = dTDP + ADP. In terms of biological role, phosphorylation of dTMP to form dTDP in both de novo and salvage pathways of dTTP synthesis. This Trichormus variabilis (strain ATCC 29413 / PCC 7937) (Anabaena variabilis) protein is Thymidylate kinase.